The following is a 353-amino-acid chain: Fe(3+) ions import ATP-binding protein FbpC 1 (353 aa).

The region spanning 9–239 (VVFRNICKQF…PASAFIADFM (231 aa)) is the ABC transporter domain. 41 to 48 (GPSGCGKT) lines the ATP pocket.

Belongs to the ABC transporter superfamily. Fe(3+) ion importer (TC 3.A.1.10) family. The complex is composed of two ATP-binding proteins (FbpC), two transmembrane proteins (FbpB) and a solute-binding protein (FbpA).

Its subcellular location is the cell inner membrane. It catalyses the reaction Fe(3+)(out) + ATP + H2O = Fe(3+)(in) + ADP + phosphate + H(+). Its function is as follows. Part of the ABC transporter complex FbpABC involved in Fe(3+) ions import. Responsible for energy coupling to the transport system. This is Fe(3+) ions import ATP-binding protein FbpC 1 from Rhizobium meliloti (strain 1021) (Ensifer meliloti).